The sequence spans 137 residues: Glutaredoxin-C9 (137 aa).

The 105-residue stretch at 32–136 (GERVRMVVEE…PILKEVGALW (105 aa)) folds into the Glutaredoxin domain. Cys52 and Cys55 are disulfide-bonded. A Responsive for interaction with TGA factors motif is present at residues 134-137 (ALWL).

The protein belongs to the glutaredoxin family. CC-type subfamily. As to quaternary structure, interacts with TGA2 and TGA6.

It localises to the cytoplasm. It is found in the nucleus. Functionally, has a glutathione-disulfide oxidoreductase activity in the presence of NADPH and glutathione reductase. Reduces low molecular weight disulfides and proteins. The polypeptide is Glutaredoxin-C9 (GRXC9) (Arabidopsis thaliana (Mouse-ear cress)).